Here is a 502-residue protein sequence, read N- to C-terminus: ATP synthase subunit alpha (502 aa).

169-176 serves as a coordination point for ATP; that stretch reads GDRQTGKT.

The protein belongs to the ATPase alpha/beta chains family. As to quaternary structure, F-type ATPases have 2 components, CF(1) - the catalytic core - and CF(0) - the membrane proton channel. CF(1) has five subunits: alpha(3), beta(3), gamma(1), delta(1), epsilon(1). CF(0) has three main subunits: a(1), b(2) and c(9-12). The alpha and beta chains form an alternating ring which encloses part of the gamma chain. CF(1) is attached to CF(0) by a central stalk formed by the gamma and epsilon chains, while a peripheral stalk is formed by the delta and b chains.

It is found in the cell membrane. It carries out the reaction ATP + H2O + 4 H(+)(in) = ADP + phosphate + 5 H(+)(out). In terms of biological role, produces ATP from ADP in the presence of a proton gradient across the membrane. The alpha chain is a regulatory subunit. The protein is ATP synthase subunit alpha of Exiguobacterium sibiricum (strain DSM 17290 / CCUG 55495 / CIP 109462 / JCM 13490 / 255-15).